Consider the following 87-residue polypeptide: U3-theraphotoxin-Hhn1f (87 aa).

The N-terminal stretch at 1 to 24 is a signal peptide; sequence MVNMKASMFLTSAGLVLLFVVCYA. The propeptide occupies 25-52; the sequence is SESEEKEFPKEMLSSIFAVDNDFKQEER. Intrachain disulfides connect C54–C67, C61–C72, and C66–C79.

Belongs to the neurotoxin 10 (Hwtx-1) family. 51 (Hntx-8) subfamily. Hntx-8 sub-subfamily. In terms of tissue distribution, expressed by the venom gland.

It localises to the secreted. In terms of biological role, ion channel inhibitor. The protein is U3-theraphotoxin-Hhn1f of Cyriopagopus hainanus (Chinese bird spider).